A 387-amino-acid polypeptide reads, in one-letter code: Acetylserotonin O-methyltransferase (387 aa).

Residues Tyr-153, Trp-170, Glu-216, 246 to 248 (GDF), and Arg-263 contribute to the S-adenosyl-L-methionine site. His-266 acts as the Proton donor/acceptor in catalysis. Asp-267 and Gln-317 together coordinate substrate. The interval 355–387 (ARGGGAGARSDGGGGEATSQTGSGTGREVGAQD) is disordered. The segment covering 356–370 (RGGGAGARSDGGGGE) has biased composition (gly residues).

This sequence belongs to the class I-like SAM-binding methyltransferase superfamily. Cation-independent O-methyltransferase family. In terms of assembly, homodimer.

It carries out the reaction N-acetylserotonin + S-adenosyl-L-methionine = melatonin + S-adenosyl-L-homocysteine + H(+). Its pathway is aromatic compound metabolism; melatonin biosynthesis; melatonin from serotonin: step 1/2. Its function is as follows. Catalyzes the transfer of a methyl group onto N-acetylserotonin, producing melatonin (N-acetyl-5-methoxytryptamine). The sequence is that of Acetylserotonin O-methyltransferase (Asmt) from Mus musculus molossinus (Japanese house mouse).